The chain runs to 243 residues: Small ribosomal subunit protein eS4 (243 aa).

An S4 RNA-binding domain is found at 43 to 105 (IPLLYIVRDY…TGEHYRVLPN (63 aa)).

The protein belongs to the eukaryotic ribosomal protein eS4 family. Part of the 30S ribosomal subunit.

The sequence is that of Small ribosomal subunit protein eS4 from Pyrococcus furiosus (strain ATCC 43587 / DSM 3638 / JCM 8422 / Vc1).